Consider the following 349-residue polypeptide: UDP-N-acetylenolpyruvoylglucosamine reductase (349 aa).

The 174-residue stretch at 24–197 (FGIDATARFA…VAVTFRLPKR (174 aa)) folds into the FAD-binding PCMH-type domain. Residue Arg173 is part of the active site. The active-site Proton donor is Ser249. Residue Glu345 is part of the active site.

The protein belongs to the MurB family. The cofactor is FAD.

The protein resides in the cytoplasm. It carries out the reaction UDP-N-acetyl-alpha-D-muramate + NADP(+) = UDP-N-acetyl-3-O-(1-carboxyvinyl)-alpha-D-glucosamine + NADPH + H(+). Its pathway is cell wall biogenesis; peptidoglycan biosynthesis. Functionally, cell wall formation. This chain is UDP-N-acetylenolpyruvoylglucosamine reductase, found in Burkholderia ambifaria (strain ATCC BAA-244 / DSM 16087 / CCUG 44356 / LMG 19182 / AMMD) (Burkholderia cepacia (strain AMMD)).